Here is a 174-residue protein sequence, read N- to C-terminus: Adenine phosphoribosyltransferase (174 aa).

Belongs to the purine/pyrimidine phosphoribosyltransferase family. In terms of assembly, homodimer.

Its subcellular location is the cytoplasm. The enzyme catalyses AMP + diphosphate = 5-phospho-alpha-D-ribose 1-diphosphate + adenine. The protein operates within purine metabolism; AMP biosynthesis via salvage pathway; AMP from adenine: step 1/1. Its function is as follows. Catalyzes a salvage reaction resulting in the formation of AMP, that is energically less costly than de novo synthesis. The chain is Adenine phosphoribosyltransferase from Dichelobacter nodosus (strain VCS1703A).